The primary structure comprises 326 residues: 4-hydroxythreonine-4-phosphate dehydrogenase (326 aa).

2 residues coordinate substrate: H132 and T133. A divalent metal cation contacts are provided by H163, H208, and H263. 3 residues coordinate substrate: K271, N280, and R289.

The protein belongs to the PdxA family. Homodimer. Requires Zn(2+) as cofactor. The cofactor is Mg(2+). It depends on Co(2+) as a cofactor.

It localises to the cytoplasm. The catalysed reaction is 4-(phosphooxy)-L-threonine + NAD(+) = 3-amino-2-oxopropyl phosphate + CO2 + NADH. The protein operates within cofactor biosynthesis; pyridoxine 5'-phosphate biosynthesis; pyridoxine 5'-phosphate from D-erythrose 4-phosphate: step 4/5. Catalyzes the NAD(P)-dependent oxidation of 4-(phosphooxy)-L-threonine (HTP) into 2-amino-3-oxo-4-(phosphooxy)butyric acid which spontaneously decarboxylates to form 3-amino-2-oxopropyl phosphate (AHAP). This Roseobacter denitrificans (strain ATCC 33942 / OCh 114) (Erythrobacter sp. (strain OCh 114)) protein is 4-hydroxythreonine-4-phosphate dehydrogenase.